The sequence spans 258 residues: Indole-3-glycerol phosphate synthase (258 aa).

Belongs to the TrpC family.

The catalysed reaction is 1-(2-carboxyphenylamino)-1-deoxy-D-ribulose 5-phosphate + H(+) = (1S,2R)-1-C-(indol-3-yl)glycerol 3-phosphate + CO2 + H2O. It participates in amino-acid biosynthesis; L-tryptophan biosynthesis; L-tryptophan from chorismate: step 4/5. This Legionella pneumophila (strain Paris) protein is Indole-3-glycerol phosphate synthase.